A 590-amino-acid polypeptide reads, in one-letter code: Aspartate--tRNA(Asp/Asn) ligase (590 aa).

Glu-175 provides a ligand contact to L-aspartate. The interval 199–202 is aspartate; sequence QQYK. Residues Arg-221 and His-450 each contribute to the L-aspartate site. 221–223 contacts ATP; that stretch reads RDE. An ATP-binding site is contributed by Glu-484. Arg-491 contacts L-aspartate. 536–539 serves as a coordination point for ATP; the sequence is GVDR.

The protein belongs to the class-II aminoacyl-tRNA synthetase family. Type 1 subfamily. Homodimer.

It is found in the cytoplasm. It catalyses the reaction tRNA(Asx) + L-aspartate + ATP = L-aspartyl-tRNA(Asx) + AMP + diphosphate. Functionally, aspartyl-tRNA synthetase with relaxed tRNA specificity since it is able to aspartylate not only its cognate tRNA(Asp) but also tRNA(Asn). Reaction proceeds in two steps: L-aspartate is first activated by ATP to form Asp-AMP and then transferred to the acceptor end of tRNA(Asp/Asn). This chain is Aspartate--tRNA(Asp/Asn) ligase, found in Rhodopseudomonas palustris (strain HaA2).